The primary structure comprises 140 residues: Cytochrome b (140 aa).

Residues 38-58 (FFALHFLLPFVLAALVIMHLI) traverse the membrane as a helical segment. 2 residues coordinate heme b: His42 and His56. His61 lines the a ubiquinone pocket. A helical membrane pass occupies residues 85 to 105 (FVFKDLVTIFIFFIVLSIFVF).

The protein belongs to the cytochrome b family. As to quaternary structure, fungal cytochrome b-c1 complex contains 10 subunits; 3 respiratory subunits, 2 core proteins and 5 low-molecular weight proteins. Cytochrome b-c1 complex is a homodimer. Heme b is required as a cofactor.

The protein localises to the mitochondrion inner membrane. Component of the ubiquinol-cytochrome c reductase complex (complex III or cytochrome b-c1 complex) that is part of the mitochondrial respiratory chain. The b-c1 complex mediates electron transfer from ubiquinol to cytochrome c. Contributes to the generation of a proton gradient across the mitochondrial membrane that is then used for ATP synthesis. The polypeptide is Cytochrome b (cob) (Aspergillus terreus).